The sequence spans 94 residues: Large ribosomal subunit protein bL25 (94 aa).

Belongs to the bacterial ribosomal protein bL25 family. In terms of assembly, part of the 50S ribosomal subunit; part of the 5S rRNA/L5/L18/L25 subcomplex. Contacts the 5S rRNA. Binds to the 5S rRNA independently of L5 and L18.

Its function is as follows. This is one of the proteins that binds to the 5S RNA in the ribosome where it forms part of the central protuberance. The sequence is that of Large ribosomal subunit protein bL25 from Photorhabdus laumondii subsp. laumondii (strain DSM 15139 / CIP 105565 / TT01) (Photorhabdus luminescens subsp. laumondii).